A 310-amino-acid chain; its full sequence is tRNA dimethylallyltransferase (310 aa).

14–21 is an ATP binding site; sequence GPTASGKS. Position 16–21 (16–21) interacts with substrate; it reads TASGKS. Interaction with substrate tRNA regions lie at residues 39 to 42 and 163 to 167; these read DSMQ and QRIVR.

This sequence belongs to the IPP transferase family. In terms of assembly, monomer. Mg(2+) serves as cofactor.

It carries out the reaction adenosine(37) in tRNA + dimethylallyl diphosphate = N(6)-dimethylallyladenosine(37) in tRNA + diphosphate. Catalyzes the transfer of a dimethylallyl group onto the adenine at position 37 in tRNAs that read codons beginning with uridine, leading to the formation of N6-(dimethylallyl)adenosine (i(6)A). The polypeptide is tRNA dimethylallyltransferase (Brucella suis biovar 1 (strain 1330)).